Reading from the N-terminus, the 646-residue chain is Threonine--tRNA ligase (646 aa).

The region spanning 1–61 (MIKITFPDGS…NEDADFVLYK (61 aa)) is the TGS domain. Residues 242–541 (DHRKIGKEMQ…LIEHTAGKFP (300 aa)) are catalytic. The Zn(2+) site is built by cysteine 337, histidine 388, and histidine 518.

It belongs to the class-II aminoacyl-tRNA synthetase family. In terms of assembly, homodimer. Zn(2+) is required as a cofactor.

It is found in the cytoplasm. It carries out the reaction tRNA(Thr) + L-threonine + ATP = L-threonyl-tRNA(Thr) + AMP + diphosphate + H(+). Catalyzes the attachment of threonine to tRNA(Thr) in a two-step reaction: L-threonine is first activated by ATP to form Thr-AMP and then transferred to the acceptor end of tRNA(Thr). Also edits incorrectly charged L-seryl-tRNA(Thr). This chain is Threonine--tRNA ligase, found in Bacteroides thetaiotaomicron (strain ATCC 29148 / DSM 2079 / JCM 5827 / CCUG 10774 / NCTC 10582 / VPI-5482 / E50).